Here is a 334-residue protein sequence, read N- to C-terminus: Chemotactic signal transduction system substrate-binding protein CosB (334 aa).

The signal sequence occupies residues 1–29; that stretch reads MMDTPEHASTSSRRQLLGMLAAGGTTAVA.

The protein belongs to the OsmX family.

The protein localises to the cell membrane. Mediates chemotaxis towards compatible osmolytes. May function as a receptor that binds the osmolytes and transduces a signal to CosT. Has probably no additional role in transport. This chain is Chemotactic signal transduction system substrate-binding protein CosB (cosB), found in Halobacterium salinarum (strain ATCC 29341 / DSM 671 / R1).